Here is a 270-residue protein sequence, read N- to C-terminus: Methylthioribulose-1-phosphate dehydratase (270 aa).

Cys-122 lines the substrate pocket. Zn(2+) contacts are provided by His-140 and His-142. The Proton donor/acceptor role is filled by Glu-165. His-230 is a Zn(2+) binding site.

It belongs to the aldolase class II family. MtnB subfamily. Zn(2+) serves as cofactor.

The protein localises to the cytoplasm. It carries out the reaction 5-(methylsulfanyl)-D-ribulose 1-phosphate = 5-methylsulfanyl-2,3-dioxopentyl phosphate + H2O. The protein operates within amino-acid biosynthesis; L-methionine biosynthesis via salvage pathway; L-methionine from S-methyl-5-thio-alpha-D-ribose 1-phosphate: step 2/6. Functionally, catalyzes the dehydration of methylthioribulose-1-phosphate (MTRu-1-P) into 2,3-diketo-5-methylthiopentyl-1-phosphate (DK-MTP-1-P). In Candida albicans (strain SC5314 / ATCC MYA-2876) (Yeast), this protein is Methylthioribulose-1-phosphate dehydratase.